Here is a 451-residue protein sequence, read N- to C-terminus: Adenylyltransferase and sulfurtransferase MOCS3 (451 aa).

At Thr-60 the chain carries Phosphothreonine. Residues Gly-99, Asp-120, 127 to 131 (SNFHR), Lys-144, and 188 to 189 (DN) contribute to the ATP site. Cys-229 and Cys-232 together coordinate Zn(2+). Residue Cys-246 is the Glycyl thioester intermediate; for adenylyltransferase activity of the active site. 2 residues coordinate Zn(2+): Cys-304 and Cys-307. The Rhodanese domain maps to 353 to 449 (QQQPHLLIDV…WTHKVDPSFP (97 aa)). Residue Cys-408 is the Cysteine persulfide intermediate; for sulfurtransferase activity of the active site.

It in the N-terminal section; belongs to the HesA/MoeB/ThiF family. UBA4 subfamily. Zn(2+) is required as a cofactor.

It is found in the cytoplasm. Its subcellular location is the cytosol. It carries out the reaction [molybdopterin-synthase sulfur-carrier protein]-C-terminal Gly-Gly + ATP + H(+) = [molybdopterin-synthase sulfur-carrier protein]-C-terminal Gly-Gly-AMP + diphosphate. The enzyme catalyses [molybdopterin-synthase sulfur-carrier protein]-C-terminal Gly-Gly-AMP + S-sulfanyl-L-cysteinyl-[cysteine desulfurase] + AH2 = [molybdopterin-synthase sulfur-carrier protein]-C-terminal-Gly-aminoethanethioate + L-cysteinyl-[cysteine desulfurase] + A + AMP + 2 H(+). The protein operates within tRNA modification; 5-methoxycarbonylmethyl-2-thiouridine-tRNA biosynthesis. It functions in the pathway cofactor biosynthesis; molybdopterin biosynthesis. Plays a central role in 2-thiolation of mcm(5)S(2)U at tRNA wobble positions of cytosolic tRNA(Lys), tRNA(Glu) and tRNA(Gln). Also essential during biosynthesis of the molybdenum cofactor. Acts by mediating the C-terminal thiocarboxylation of sulfur carriers URM1 and MOCS2A. Its N-terminus first activates URM1 and MOCS2A as acyl-adenylates (-COAMP), then the persulfide sulfur on the catalytic cysteine is transferred to URM1 and MOCS2A to form thiocarboxylation (-COSH) of their C-terminus. The reaction probably involves hydrogen sulfide that is generated from the persulfide intermediate and that acts as a nucleophile towards URM1 and MOCS2A. Subsequently, a transient disulfide bond is formed. Does not use thiosulfate as sulfur donor; NFS1 probably acting as a sulfur donor for thiocarboxylation reactions. This Drosophila ananassae (Fruit fly) protein is Adenylyltransferase and sulfurtransferase MOCS3.